Here is a 101-residue protein sequence, read N- to C-terminus: UPF0134 protein MPN_675 (101 aa).

This sequence belongs to the UPF0134 family.

This is UPF0134 protein MPN_675 from Mycoplasma pneumoniae (strain ATCC 29342 / M129 / Subtype 1) (Mycoplasmoides pneumoniae).